The chain runs to 855 residues: Suppressor of tumorigenicity 14 protein (855 aa).

Positions 1-20 are disordered; sequence MGSDRARKGGGGPKDFGAGL. The Cytoplasmic portion of the chain corresponds to 1 to 55; that stretch reads MGSDRARKGGGGPKDFGAGLKYNSRHEKVNGLEEGVEFLPVNNVKKVEKHGPGRW. The helical; Signal-anchor for type II membrane protein transmembrane segment at 56-76 threads the bilayer; sequence VVLAAVLIGLLLVLLGIGFLV. Over 77 to 855 the chain is Extracellular; sequence WHLQYRDVRV…RDWIKENTGV (779 aa). Residues 86 to 203 enclose the SEA domain; sequence VQKVFNGYMR…TSVVAFPTDS (118 aa). Asparagine 109 carries an N-linked (GlcNAc...) asparagine glycan. Cysteine 214 and cysteine 244 are disulfide-bonded. CUB domains are found at residues 214–334 and 340–447; these read CSFG…FFQL and CGGR…YLSY. Asparagine 302 carries N-linked (GlcNAc...) asparagine glycosylation. 15 cysteine pairs are disulfide-bonded: cysteine 340/cysteine 366, cysteine 397/cysteine 410, cysteine 453/cysteine 464, cysteine 459/cysteine 477, cysteine 471/cysteine 486, cysteine 488/cysteine 501, cysteine 496/cysteine 514, cysteine 508/cysteine 523, cysteine 525/cysteine 537, cysteine 532/cysteine 550, cysteine 544/cysteine 559, cysteine 567/cysteine 579, cysteine 574/cysteine 593, cysteine 587/cysteine 602, and cysteine 641/cysteine 657. 4 LDL-receptor class A domains span residues 452 to 487, 487 to 524, 524 to 560, and 566 to 603; these read PCPG…LNCS, SCDA…QGCS, SCPA…ASCP, and TCTK…KDCD. An N-linked (GlcNAc...) asparagine glycan is attached at asparagine 485. Residues 615–854 enclose the Peptidase S1 domain; it reads VVGGTDADEG…FRDWIKENTG (240 aa). Residues histidine 656 and aspartate 711 each act as charge relay system in the active site. N-linked (GlcNAc...) asparagine glycosylation is present at asparagine 772. Intrachain disulfides connect cysteine 776-cysteine 790 and cysteine 801-cysteine 830. The active-site Charge relay system is serine 805.

Belongs to the peptidase S1 family. As to quaternary structure, interacts with CDCP1. May interact with TMEFF1. Interacts with iripin-3, a serine protease inhibitor from Ixodes ricinus saliva. Interacts with iripin-1, a serine protease inhibitor from Ixodes ricinus saliva.

The protein resides in the membrane. The catalysed reaction is Cleaves various synthetic substrates with Arg or Lys at the P1 position and prefers small side-chain amino acids, such as Ala and Gly, at the P2 position.. Functionally, exhibits trypsin-like activity as defined by cleavage of synthetic substrates with Arg or Lys as the P1 site. Involved in the terminal differentiation of keratinocytes through prostasin (PRSS8) activation and filaggrin (FLG) processing. Proteolytically cleaves and therefore activates TMPRSS13. In Homo sapiens (Human), this protein is Suppressor of tumorigenicity 14 protein (ST14).